A 355-amino-acid chain; its full sequence is Probable nitronate monooxygenase (355 aa).

FMN is bound by residues Asn71, Gln175, Gly180, Gly219, and 238 to 241 (QMGT).

The protein belongs to the nitronate monooxygenase family. NMO class I subfamily. The cofactor is FMN.

It carries out the reaction 3 propionate 3-nitronate + 3 O2 + H2O = 3 3-oxopropanoate + 2 nitrate + nitrite + H2O2 + 3 H(+). Functionally, nitronate monooxygenase that uses molecular oxygen to catalyze the oxidative denitrification of alkyl nitronates. Acts on propionate 3-nitronate (P3N), the presumed physiological substrate. Probably functions in the detoxification of P3N, a metabolic poison produced by plants and fungi as a defense mechanism. In Staphylococcus saprophyticus subsp. saprophyticus (strain ATCC 15305 / DSM 20229 / NCIMB 8711 / NCTC 7292 / S-41), this protein is Probable nitronate monooxygenase.